A 405-amino-acid polypeptide reads, in one-letter code: MAVGLGPLPALHPVPGFELGISSAGIKRPGRKDVVVMRCAEGSSVAGVFTLNAFCAAPVILAKQRVQGTVRYLLTNTGNANAGTGEPGLVAARRTCEKLAQLTGVDASAVLPYSTGVIGEPLPVEKIEGALQAALDDLSVDNWAAAATGIMTTDTLPKGASRQFTHDGVTITVTGISKGAGMIRPNMATMLGYIATDAKVSQSVLQDLIRDGANKSFNRITIDGDTSTNDCCMLIATGQADLPEITEAKGPLFDALKKAVFDVCMDVAQAIVRDGEGATKFVTVEVNGGGNQQECLDVGYAVAHSPLIKTALFASDPNWGRILAAVGRAGVPDLDVSKIDVFLGGVCIASQGCRATTYTEEQGSAVMAEEEITIRIELGRGDCSETIWTTDLSHEYVKINAEYRT.

Residues threonine 152, lysine 178, threonine 189, glutamate 276, asparagine 400, and threonine 405 each contribute to the substrate site. The active-site Nucleophile is the threonine 189.

Belongs to the ArgJ family. As to quaternary structure, heterotetramer of two alpha and two beta chains.

The protein localises to the cytoplasm. The catalysed reaction is N(2)-acetyl-L-ornithine + L-glutamate = N-acetyl-L-glutamate + L-ornithine. It catalyses the reaction L-glutamate + acetyl-CoA = N-acetyl-L-glutamate + CoA + H(+). It functions in the pathway amino-acid biosynthesis; L-arginine biosynthesis; L-ornithine and N-acetyl-L-glutamate from L-glutamate and N(2)-acetyl-L-ornithine (cyclic): step 1/1. Its pathway is amino-acid biosynthesis; L-arginine biosynthesis; N(2)-acetyl-L-ornithine from L-glutamate: step 1/4. Catalyzes two activities which are involved in the cyclic version of arginine biosynthesis: the synthesis of N-acetylglutamate from glutamate and acetyl-CoA as the acetyl donor, and of ornithine by transacetylation between N(2)-acetylornithine and glutamate. This chain is Arginine biosynthesis bifunctional protein ArgJ, found in Pseudomonas savastanoi pv. phaseolicola (strain 1448A / Race 6) (Pseudomonas syringae pv. phaseolicola (strain 1448A / Race 6)).